A 623-amino-acid polypeptide reads, in one-letter code: Oviduct-specific glycoprotein (623 aa).

Positions 1–21 (MWKLLLWVGLVLVLKHHDGAA) are cleaved as a signal peptide. A GH18 domain is found at 22–385 (HKLVCYFTNW…YVMNDILVRA (364 aa)). Cysteines 26 and 51 form a disulfide. Residues 71 to 72 (LQ), 98 to 101 (GGWN), tyrosine 142, 211 to 214 (LSYD), and tryptophan 355 contribute to the chitin site. 2 N-linked (GlcNAc...) asparagine glycosylation sites follow: asparagine 402 and asparagine 441. Disordered regions lie at residues 539–558 (LTPVGHPSVTPVSHQSVSPG) and 594–623 (RKISVTPEGQTVPLRGEYLTSETGTHPQDG). The span at 613 to 623 (TSETGTHPQDG) shows a compositional bias: polar residues.

Belongs to the glycosyl hydrolase 18 family. Oviduct.

It is found in the cytoplasmic vesicle. Its subcellular location is the secretory vesicle. Binds to oocyte zona pellucida in vivo. May play a role in the fertilization process and/or early embryonic development. The chain is Oviduct-specific glycoprotein (OVGP1) from Papio anubis (Olive baboon).